Here is a 248-residue protein sequence, read N- to C-terminus: Orotidine 5'-phosphate decarboxylase (248 aa).

Residues Asp22, Lys44, 71 to 80, Thr131, Arg192, Gln201, Gly221, and Arg222 each bind substrate; that span reads DLKFHDIPNT. The active-site Proton donor is the Lys73.

Belongs to the OMP decarboxylase family. Type 1 subfamily. Homodimer.

It catalyses the reaction orotidine 5'-phosphate + H(+) = UMP + CO2. The protein operates within pyrimidine metabolism; UMP biosynthesis via de novo pathway; UMP from orotate: step 2/2. Catalyzes the decarboxylation of orotidine 5'-monophosphate (OMP) to uridine 5'-monophosphate (UMP). The sequence is that of Orotidine 5'-phosphate decarboxylase from Photorhabdus laumondii subsp. laumondii (strain DSM 15139 / CIP 105565 / TT01) (Photorhabdus luminescens subsp. laumondii).